The primary structure comprises 111 residues: Prothymosin alpha (111 aa).

Met-1 is subject to N-acetylmethionine. The disordered stretch occupies residues 1–111 (MSDAAVDTSS…TKKQKTEEDD (111 aa)). An N-acetylserine; in Prothymosin alpha, N-terminally processed modification is found at Ser-2. Ser-2 bears the Phosphoserine mark. Thr-8 bears the Phosphothreonine mark. A phosphoserine mark is found at Ser-9 and Ser-10. Residues Thr-13 and Thr-14 each carry the phosphothreonine modification. Residues 13-31 (TTKDLKEKKEVVEEAENGR) show a composition bias toward basic and acidic residues. The residue at position 15 (Lys-15) is an N6-acetyllysine; alternate. Lys-15 bears the N6-succinyllysine; alternate mark. Positions 43–84 (ENGEQEADNEVDEEEEEGGEEEEEEEEGDGEEEDGDEDEEAE) are enriched in acidic residues. Residues 101–111 (DTKKQKTEEDD) show a composition bias toward basic and acidic residues. At Thr-102 the chain carries Phosphothreonine. Position 103 is an N6-acetyllysine; alternate (Lys-103). Lys-103 participates in a covalent cross-link: Glycyl lysine isopeptide (Lys-Gly) (interchain with G-Cter in SUMO2); alternate. Thr-107 is subject to Phosphothreonine.

Belongs to the pro/parathymosin family. In terms of assembly, interacts with NUPR1; regulates apoptotic process. Covalently linked to a small RNA of about 20 nucleotides.

It is found in the nucleus. In terms of biological role, prothymosin alpha may mediate immune function by conferring resistance to certain opportunistic infections. The chain is Prothymosin alpha (Ptma) from Mus musculus (Mouse).